A 67-amino-acid polypeptide reads, in one-letter code: Large ribosomal subunit protein bL35 (67 aa).

The protein belongs to the bacterial ribosomal protein bL35 family.

In Mesorhizobium japonicum (strain LMG 29417 / CECT 9101 / MAFF 303099) (Mesorhizobium loti (strain MAFF 303099)), this protein is Large ribosomal subunit protein bL35.